The following is a 228-amino-acid chain: MAEDKTKPSELDQGKYDADDNVKIICLGDSAVGKSKLMERFLMDGFQPQQLSTYALTLYKHTATVDGRTILVDFWDTAGQERFQSMHASYYHKAHACIMVFDVQRKVTYRNLSTWYTELREFRPEIPCIVVANKIDDINVTQKSFNFAKKFSLPLYFVSAADGTNVVKLFNDAIRLAVSYKQNSQDFMDEIFQELENFSLEQEEEDVPDQEQSSSIETPSEEAASPHS.

GTP contacts are provided by residues G28–S35, D76–Q80, and N133–D136. The disordered stretch occupies residues L200–S228.

Belongs to the small GTPase superfamily. Rab family. Interacts (in its GTP-bound form) with CEP19 (via residues 121-150); this interaction is required for its localization to the mother centriole and cilium basal body. Interacts (in its GTP-bound form) with the intraflagellar transport (IFT) complex B (via the IFT74-IFT81 heterodimer). Binding to CEP19 and the IFT74-IFT81 heterodimer is mutually exclusive. Expressed in the testis.

The protein localises to the cytoplasm. The protein resides in the cytoskeleton. It is found in the microtubule organizing center. It localises to the centrosome. Its subcellular location is the centriole. The protein localises to the cilium basal body. In terms of biological role, small GTPase required for ciliation. Activated in a guanine nucleotide exchange factor (GEF)-independent manner via its intrinsic GDP for GTP nucleotide exchange ability. Involved in ciliary assembly by binding the intraflagellar transport (IFT) complex B from the large pool pre-docked at the base of the cilium and thus triggers its entry into the cilia. The sequence is that of Rab-like protein 2B (RABL2B) from Homo sapiens (Human).